The following is a 185-amino-acid chain: Lectin B4 (185 aa).

Residue Asn-48 is glycosylated (N-linked (GlcNAc...) asparagine). Mn(2+) contacts are provided by Glu-111 and Asp-113. The Ca(2+) site is built by Asp-113, Tyr-115, Asn-117, and Asp-120. A Mn(2+)-binding site is contributed by Asp-120. N-linked (GlcNAc...) asparagine glycosylation is present at Asn-122. A Mn(2+)-binding site is contributed by His-125.

Belongs to the leguminous lectin family. In terms of assembly, homo- or heterotetramer. V.villosa isolectins are composed of either two subunits a and two subunits B (A2B2), four subunits A (A4), or four subunits B (B4). The predominant form, isolectin B4, has no A1 erythrocyte agglutinating activity.

N-acetyl-D-galactosamine specific lectin. Binds the Tn determinant (GalNAc-alpha-O-Ser/Thr) of the tumor-associated glycopeptide. Could be required for agglutinating cells such as Tn-exposed erythrocytes. The sequence is that of Lectin B4 from Vicia villosa (Hairy vetch).